Here is a 285-residue protein sequence, read N- to C-terminus: Aspartate/glutamate leucyltransferase (285 aa).

It belongs to the R-transferase family. Bpt subfamily.

Its subcellular location is the cytoplasm. The catalysed reaction is N-terminal L-glutamyl-[protein] + L-leucyl-tRNA(Leu) = N-terminal L-leucyl-L-glutamyl-[protein] + tRNA(Leu) + H(+). It carries out the reaction N-terminal L-aspartyl-[protein] + L-leucyl-tRNA(Leu) = N-terminal L-leucyl-L-aspartyl-[protein] + tRNA(Leu) + H(+). Its function is as follows. Functions in the N-end rule pathway of protein degradation where it conjugates Leu from its aminoacyl-tRNA to the N-termini of proteins containing an N-terminal aspartate or glutamate. The chain is Aspartate/glutamate leucyltransferase from Dinoroseobacter shibae (strain DSM 16493 / NCIMB 14021 / DFL 12).